Reading from the N-terminus, the 1159-residue chain is Calcium-activated potassium channel subunit alpha-1 (1159 aa).

Topologically, residues 1–24 (EPNMDALIIPVTMEVPCDSRGQRM) are extracellular. The helical transmembrane segment at 25–45 (WWAFLASSMVTFFGGLFIILL) threads the bilayer. The Cytoplasmic portion of the chain corresponds to 46–116 (WRTLKYLWTV…MISAQTLTGR (71 aa)). S-palmitoyl cysteine attachment occurs at residues Cys56, Cys57, and Cys59. The chain crosses the membrane as a helical span at residues 117-137 (VLVVLVFALSIGALVIYFIDS). Over 138-152 (SNPIESCQNFYKDFT) the chain is Extracellular. The helical transmembrane segment at 153-173 (LQIDMAFNVFFLLYFGLRFIA) threads the bilayer. Topologically, residues 174–177 (ANDN) are cytoplasmic. The chain crosses the membrane as a helical span at residues 178–198 (LWFWLEVNSVVDFFTVPPVFV). The Extracellular segment spans residues 199 to 202 (SVYL). A helical; Voltage-sensor membrane pass occupies residues 203–223 (NRSWLGLRFLRALRLIQFSEI). The Cytoplasmic portion of the chain corresponds to 224–238 (LQFLNILKTSNSIKL). The chain crosses the membrane as a helical span at residues 239–259 (VNLLSIFISTWLTAAGFIHLV). The Extracellular segment spans residues 260–273 (ENSGDPWENFQNSQ). Positions 274-296 (ALTYWECVYLLMVTMSTVGYGDV) form an intramembrane region, pore-forming. A Selectivity for potassium motif is present at residues 290 to 293 (TVGY). The Extracellular portion of the chain corresponds to 297–305 (YAKTTPGGL). A helical transmembrane segment spans residues 306-326 (FIVFFILGGLAMFASYVPEII). Residues 327–1159 (EIIGNRKKYG…PPIREVEDEC (833 aa)) are Cytoplasmic-facing. Positions 345-487 (RKHIVVCGHI…WNWKEGDDAI (143 aa)) constitute an RCK N-terminal 1 domain. Mg(2+) contacts are provided by Glu377, Gln400, and Glu402. The segment S7 stretch occupies residues 494-514 (LGFIAQSCLAQGLSTMLANLF). The segment S8 stretch occupies residues 551–571 (LSFPTVCELCFVKLKLLMIAI). The segment at 615–619 (CKACH) is heme-binding motif. A disordered region spans residues 639–668 (EQPSTLSPKKKQRNGGMRNSPSSSPKLMRH). Thr643 is subject to Phosphothreonine. Phosphoserine occurs at positions 645, 658, and 662. Residues 717 to 737 (VLSGHVVVCIFGHVSSALIGL) are segment S9. In terms of domain architecture, RCK N-terminal 2 spans 719-863 (SGHVVVCIFG…MDKSSPDNSP (145 aa)). At Thr850 the chain carries Phosphothreonine. 2 positions are modified to phosphoserine: Ser858 and Ser862. The short motif at 883–905 (TELVNDTNVQFLDQDDDDDPDTE) is the Calcium bowl element. Ca(2+) is bound by residues Gln892, Asp895, Asp898, and Asp900. The tract at residues 912 to 932 (FACGTAFAVSVLDSLMSATYF) is segment S10. Over residues 1066–1091 (RASLSHSSHSSQSSSKKSSSVHSIPS) the composition is skewed to low complexity. A disordered region spans residues 1066 to 1124 (RASLSHSSHSSQSSSKKSSSVHSIPSTANRQNRPKSRESRDKQTEKKWFTDEPDNAYPR). A compositionally biased stretch (basic and acidic residues) spans 1100–1115 (KSRESRDKQTEKKWFT). 2 positions are modified to phosphoserine: Ser1101 and Ser1104.

This sequence belongs to the potassium channel family. Calcium-activated (TC 1.A.1.3) subfamily. KCa1.1/KCNMA1 sub-subfamily. As to quaternary structure, homotetramer; which constitutes the calcium-activated potassium channel. Interacts with beta subunits KCNMB1, KCNMB2, KCNMB3 and KCNMB4. Interacts with gamma subunits LRRC26, LRRC38, LRRC52 and LRRC55. Beta and gamma subunits are accessory, and modulate its activity. Interacts with RAB11B. Phosphorylated. Phosphorylation by kinases such as PKA and/or PKG. In smooth muscles, phosphorylation affects its activity. In terms of processing, palmitoylation by ZDHHC22 and ZDHHC23 within the intracellular linker between the S0 and S1 transmembrane domains regulates localization to the plasma membrane. Depalmitoylated by LYPLA1 and LYPLAL1, leading to retard exit from the trans-Golgi network. As to expression, expressed in all vascular and smooth muscles.

The protein resides in the cell membrane. The catalysed reaction is K(+)(in) = K(+)(out). Its activity is regulated as follows. Ethanol and carbon monoxide-bound heme increase channel activation. Heme inhibits channel activation. Functionally, potassium channel activated by both membrane depolarization or increase in cytosolic Ca(2+) that mediates export of K(+). It is also activated by the concentration of cytosolic Mg(2+). Its activation dampens the excitatory events that elevate the cytosolic Ca(2+) concentration and/or depolarize the cell membrane. It therefore contributes to repolarization of the membrane potential. Plays a key role in controlling excitability in a number of systems, such as regulation of the contraction of smooth muscle, the tuning of hair cells in the cochlea, regulation of transmitter release, and innate immunity. In smooth muscles, its activation by high level of Ca(2+), caused by ryanodine receptors in the sarcoplasmic reticulum, regulates the membrane potential. In cochlea cells, its number and kinetic properties partly determine the characteristic frequency of each hair cell and thereby helps to establish a tonotopic map. Kinetics of KCNMA1 channels are determined by alternative splicing, phosphorylation status and its combination with modulating beta subunits. Highly sensitive to both iberiotoxin (IbTx) and charybdotoxin (CTX). This is Calcium-activated potassium channel subunit alpha-1 (KCNMA1) from Canis lupus familiaris (Dog).